A 176-amino-acid polypeptide reads, in one-letter code: Ribosome maturation factor RimM (176 aa).

The 80-residue stretch at 97–176 (EDEFYWRDLI…QILVDWDPDF (80 aa)) folds into the PRC barrel domain.

The protein belongs to the RimM family. In terms of assembly, binds ribosomal protein uS19.

The protein localises to the cytoplasm. An accessory protein needed during the final step in the assembly of 30S ribosomal subunit, possibly for assembly of the head region. Essential for efficient processing of 16S rRNA. May be needed both before and after RbfA during the maturation of 16S rRNA. It has affinity for free ribosomal 30S subunits but not for 70S ribosomes. The chain is Ribosome maturation factor RimM from Shewanella halifaxensis (strain HAW-EB4).